We begin with the raw amino-acid sequence, 718 residues long: D-(-)-3-hydroxybutyrate oligomer hydrolase (718 aa).

The active-site Charge relay system is Ser-320.

It belongs to the D-(-)-3-hydroxybutyrate oligomer hydrolase family.

Its subcellular location is the cytoplasm. The catalysed reaction is (3R)-hydroxybutanoate dimer + H2O = 2 (R)-3-hydroxybutanoate + H(+). It functions in the pathway lipid metabolism; butanoate metabolism. With respect to regulation, inhibited by diisopropylfluorophosphate (DFP). Participates in the degradation of poly-3-hydroxybutyrate (PHB). It works downstream of poly(3-hydroxybutyrate) depolymerase, hydrolyzing D(-)-3-hydroxybutyrate oligomers of various length (3HB-oligomers) into 3HB-monomers. Seems to have also poly(3-hydroxybutyrate) depolymerase activity since it is able to release 3HB-monomers from artificial amorphous PHB. In Cupriavidus necator (strain ATCC 17699 / DSM 428 / KCTC 22496 / NCIMB 10442 / H16 / Stanier 337) (Ralstonia eutropha), this protein is D-(-)-3-hydroxybutyrate oligomer hydrolase (phaZ2).